The primary structure comprises 503 residues: Ribose import ATP-binding protein RbsA (503 aa).

2 consecutive ABC transporter domains span residues 10–246 (LEVR…VGRD) and 256–500 (VEPG…TGSE). 42–49 (GENGAGKS) serves as a coordination point for ATP.

This sequence belongs to the ABC transporter superfamily. Ribose importer (TC 3.A.1.2.1) family. In terms of assembly, the complex is composed of an ATP-binding protein (RbsA), two transmembrane proteins (RbsC) and a solute-binding protein (RbsB).

The protein localises to the cell membrane. The enzyme catalyses D-ribose(out) + ATP + H2O = D-ribose(in) + ADP + phosphate + H(+). Its function is as follows. Part of the ABC transporter complex RbsABC involved in ribose import. Responsible for energy coupling to the transport system. This is Ribose import ATP-binding protein RbsA from Rhodococcus jostii (strain RHA1).